The primary structure comprises 22 residues: Leptoglycin (22 aa).

Positions 1-22 (GLLGGLLGPLLGGGGGGGGGLL) are disordered.

In terms of tissue distribution, expressed by the skin glands.

The protein localises to the secreted. Antimicrobial protein. Has antibacterial activity against the Gram-negative bacteria E.coli ATCC 28922 (MIC=50 uM), P.aeruginosa ATCC 9027 (MIC=8 uM) and C.freundii ATCC 8090 (MIC=75 uM). Does not have hemolytic activity. This is Leptoglycin from Leptodactylus pentadactylus (Smokey jungle frog).